Here is a 252-residue protein sequence, read N- to C-terminus: 4-hydroxy-tetrahydrodipicolinate reductase (252 aa).

8 to 13 (GALGRM) is a binding site for NAD(+). NADP(+) is bound at residue Arg-36. NAD(+) is bound by residues 89-91 (GTT) and 114-117 (SSNF). The Proton donor/acceptor role is filled by His-146. His-147 is a (S)-2,3,4,5-tetrahydrodipicolinate binding site. The active-site Proton donor is the Lys-150. (S)-2,3,4,5-tetrahydrodipicolinate is bound at residue 156-157 (GT).

The protein belongs to the DapB family.

It localises to the cytoplasm. It catalyses the reaction (S)-2,3,4,5-tetrahydrodipicolinate + NAD(+) + H2O = (2S,4S)-4-hydroxy-2,3,4,5-tetrahydrodipicolinate + NADH + H(+). The catalysed reaction is (S)-2,3,4,5-tetrahydrodipicolinate + NADP(+) + H2O = (2S,4S)-4-hydroxy-2,3,4,5-tetrahydrodipicolinate + NADPH + H(+). It participates in amino-acid biosynthesis; L-lysine biosynthesis via DAP pathway; (S)-tetrahydrodipicolinate from L-aspartate: step 4/4. In terms of biological role, catalyzes the conversion of 4-hydroxy-tetrahydrodipicolinate (HTPA) to tetrahydrodipicolinate. In Methanoculleus marisnigri (strain ATCC 35101 / DSM 1498 / JR1), this protein is 4-hydroxy-tetrahydrodipicolinate reductase.